The primary structure comprises 671 residues: DNA ligase (671 aa).

NAD(+)-binding positions include 31-35, 80-81, and Glu110; these read DAEYD and SL. The active-site N6-AMP-lysine intermediate is the Lys112. The NAD(+) site is built by Arg133, Glu167, Lys283, and Lys307. Zn(2+) is bound by residues Cys401, Cys404, Cys419, and Cys424. A BRCT domain is found at 587-671; it reads EEELVFTGKT…YLPDEGGLNE (85 aa).

It belongs to the NAD-dependent DNA ligase family. LigA subfamily. It depends on Mg(2+) as a cofactor. Mn(2+) serves as cofactor.

The catalysed reaction is NAD(+) + (deoxyribonucleotide)n-3'-hydroxyl + 5'-phospho-(deoxyribonucleotide)m = (deoxyribonucleotide)n+m + AMP + beta-nicotinamide D-nucleotide.. In terms of biological role, DNA ligase that catalyzes the formation of phosphodiester linkages between 5'-phosphoryl and 3'-hydroxyl groups in double-stranded DNA using NAD as a coenzyme and as the energy source for the reaction. It is essential for DNA replication and repair of damaged DNA. This Listeria monocytogenes serotype 4b (strain F2365) protein is DNA ligase.